The following is a 254-amino-acid chain: Adenosylcobinamide-GDP ribazoletransferase (254 aa).

6 helical membrane-spanning segments follow: residues 36 to 56, 61 to 81, 114 to 134, 138 to 158, 197 to 217, and 232 to 252; these read YYPLVGLILGGALWLALTLLL, PLVTAALLLALELILTGGIHL, ALSAMVYLLLKFSLLAGLLAL, LVPYLVLFMPILSRWIFLIGV, WVLQWPGIAGFILATLFILLF, and LYGASIELSELLFLLGAFPLL.

The protein belongs to the CobS family. The cofactor is Mg(2+).

Its subcellular location is the cell membrane. It carries out the reaction alpha-ribazole + adenosylcob(III)inamide-GDP = adenosylcob(III)alamin + GMP + H(+). The enzyme catalyses alpha-ribazole 5'-phosphate + adenosylcob(III)inamide-GDP = adenosylcob(III)alamin 5'-phosphate + GMP + H(+). It participates in cofactor biosynthesis; adenosylcobalamin biosynthesis; adenosylcobalamin from cob(II)yrinate a,c-diamide: step 7/7. Joins adenosylcobinamide-GDP and alpha-ribazole to generate adenosylcobalamin (Ado-cobalamin). Also synthesizes adenosylcobalamin 5'-phosphate from adenosylcobinamide-GDP and alpha-ribazole 5'-phosphate. In Desulfitobacterium hafniense (strain Y51), this protein is Adenosylcobinamide-GDP ribazoletransferase.